Reading from the N-terminus, the 499-residue chain is Endosomal/lysosomal proton channel TMEM175 (499 aa).

The Cytoplasmic portion of the chain corresponds to 1–30 (MSRLQTEEQAVDSEGDSSLHRRNEEGTQSS). Positions 1 to 30 (MSRLQTEEQAVDSEGDSSLHRRNEEGTQSS) are disordered. Thr6 is modified (phosphothreonine). Residues 31 to 53 (HRMLGFSDALLSIIATVMILPVT) form a helical membrane-spanning segment. The short motif at 32–38 (RMLGFSD) is the RxxxFSD motif 1 element. The Lumenal segment spans residues 54 to 74 (HTEISPEQQFDKSIQKLLATR). The segment at 55 to 60 (TEISPE) is short helix H1-1. The short helix H2-1 stretch occupies residues 62–68 (QFDKSIQ). A helical transmembrane segment spans residues 75–97 (IAVYLMTFLIVTVAWTAHTRLFQ). At 98 to 103 (VVGKID) the chain is on the cytoplasmic side. Residues 104 to 125 (DTLALLNLACMMTITLLPYTFS) traverse the membrane as a helical segment. The Lumenal segment spans residues 126-135 (LMVTFPDVPL). Residues 136-157 (GIFLFCVCVIAIGSVQAMIVGY) form a helical membrane-spanning segment. Topologically, residues 158–181 (AFHFPHLLNPQIQCSTHRDLSRRH) are cytoplasmic. A helical membrane pass occupies residues 182 to 202 (ILHLVLRGPALCFVAAVFSLF). Over 203-207 (FFPLS) the chain is Lumenal. Residues 208–227 (YLLMVTVIFLPHISKATTWC) traverse the membrane as a helical segment. Residues 228-254 (KDKLMGQRESPAHDMEPFSIDLHAPLS) lie on the Cytoplasmic side of the membrane. Residues 255-279 (KERVEAFSDGVYAIVATLLILDICE) traverse the membrane as a helical segment. The RxxxFSD motif 2 motif lies at 257 to 263 (RVEAFSD). Residues 280 to 306 (DNVPDPKDVQEKFSGSLVAALGAYGPQ) lie on the Lumenal side of the membrane. The tract at residues 285 to 293 (PKDVQEKFS) is short helix H1-2. Positions 295–301 (SLVAALG) are short helix H2-2. A helical transmembrane segment spans residues 307–329 (FLAYFGSFATVGLLWFAHHSLFL). At 330 to 335 (HVRKAT) the chain is on the cytoplasmic side. Residues 336-357 (QTMGLLNILSLAFVGGLPLAYQ) form a helical membrane-spanning segment. The Lumenal portion of the chain corresponds to 358 to 372 (QTSAFARQPHDELER). Residues 373–393 (VRVSCAIIFFASIFQFAIWTT) traverse the membrane as a helical segment. The Cytoplasmic portion of the chain corresponds to 394 to 413 (ALLHQTETLQPAVQFGGQEH). A helical transmembrane segment spans residues 414–437 (AFMFAKLALYPCASLLAFAATCLL). Topologically, residues 438-439 (SR) are lumenal. Residues 440–466 (FSTAIFHLMQISVPFAFLLLRLLVRLA) traverse the membrane as a helical segment. The Cytoplasmic segment spans residues 467–499 (LAGLQVLRGLWPHHPQQDQSEPEAQSQLLPDPC).

It belongs to the TMEM175 family. In terms of assembly, homodimer. Interacts with AKT (AKT1, AKT2 or AKT3); leading to formation of the lysoK(GF) complex, which activates the channel. Interacts with LAMP1; inhibiting the proton channel activity of TMEM175. Interacts with LAMP2; inhibiting the proton channel activity of TMEM175.

Its subcellular location is the endosome membrane. It is found in the lysosome membrane. The enzyme catalyses H(+)(in) = H(+)(out). The catalysed reaction is K(+)(in) = K(+)(out). With respect to regulation, active at low pH (under pH 4.6): proton channel activity is activated by luminal side protons. Polyunsaturated fatty acids, such as arachidonic acid, also activate the channel activity. Proton channel activity is directly inhibited by LAMP1 or LAMP2, facilitating lysosomal acidification. Channel activity is activated following interaction with AKT (AKT1, AKT2 or AKT3): interaction promotes activation from closed to an open state. Activation by AKT is independent of AKT serine/threonine-protein kinase activity. Proton-activated proton channel that catalyzes proton efflux from endosomes and lysosomes to maintain a steady-state pH. Activated at low pH (under pH 4.6) by luminal side protons: selectively mediates lysosomal proton release from lysosomes, eliciting a proton leak that balances V-ATPase activity to maintain pH homeostasis. Regulation of lumenal pH stability is required for autophagosome-lysosome fusion. Also acts as a potassium channel at higher pH, regulating potassium conductance in endosomes and lysosomes. Constitutes the pore-forming subunit of the lysoK(GF) complex, a complex activated by extracellular growth factors. The lysoK(GF) complex is composed of TMEM175 and AKT (AKT1, AKT2 or AKT3), a major target of growth factor receptors: in the complex, TMEM175 channel is opened by conformational changes by AKT, leading to its activation. The lysoK(GF) complex is required to protect neurons against stress-induced damage. The chain is Endosomal/lysosomal proton channel TMEM175 from Mus musculus (Mouse).